We begin with the raw amino-acid sequence, 119 residues long: DNA-binding protein inhibitor ID-3 (119 aa).

The bHLH domain occupies 28–80 (RGKSPAAEEPLSLLDDMNHCYSRLRELVPGVPRGTQLSQVEILQRVIDYILDL).

As to quaternary structure, homodimer, and heterodimer with other HLH proteins. Interacts with COPS5 and COPS7A. Interacts with IFI204. Interacts with GATA4 and NKX2-5. Interacts with ANKRD2; both proteins cooperate in myoblast differentiation. Interacts with CLOCK and BMAL1.

It is found in the nucleus. Transcriptional regulator (lacking a basic DNA binding domain) which negatively regulates the basic helix-loop-helix (bHLH) transcription factors by forming heterodimers and inhibiting their DNA binding and transcriptional activity. Implicated in regulating a variety of cellular processes, including cellular growth, senescence, differentiation, apoptosis, angiogenesis, and neoplastic transformation. Involved in myogenesis by inhibiting skeletal muscle and cardiac myocyte differentiation and promoting muscle precursor cells proliferation. Inhibits the binding of E2A-containing protein complexes to muscle creatine kinase E-box enhancer. Regulates the circadian clock by repressing the transcriptional activator activity of the CLOCK-BMAL1 heterodimer. This Bos taurus (Bovine) protein is DNA-binding protein inhibitor ID-3 (ID3).